A 313-amino-acid polypeptide reads, in one-letter code: tRNA-cytidine(32) 2-sulfurtransferase (313 aa).

The short motif at 47-52 (SGGKDS) is the PP-loop motif element. Residues Cys-122, Cys-125, and Cys-213 each contribute to the [4Fe-4S] cluster site. The interval 288–313 (PVGWQPEDDEDTEKRPPVRLDVLEIK) is disordered. Positions 299–313 (TEKRPPVRLDVLEIK) are enriched in basic and acidic residues.

The protein belongs to the TtcA family. In terms of assembly, homodimer. Requires Mg(2+) as cofactor. The cofactor is [4Fe-4S] cluster.

The protein resides in the cytoplasm. It carries out the reaction cytidine(32) in tRNA + S-sulfanyl-L-cysteinyl-[cysteine desulfurase] + AH2 + ATP = 2-thiocytidine(32) in tRNA + L-cysteinyl-[cysteine desulfurase] + A + AMP + diphosphate + H(+). It functions in the pathway tRNA modification. In terms of biological role, catalyzes the ATP-dependent 2-thiolation of cytidine in position 32 of tRNA, to form 2-thiocytidine (s(2)C32). The sulfur atoms are provided by the cysteine/cysteine desulfurase (IscS) system. This is tRNA-cytidine(32) 2-sulfurtransferase from Yersinia pseudotuberculosis serotype O:1b (strain IP 31758).